Consider the following 351-residue polypeptide: MSKIVLDNVRKSYGGNIEVIKGVSLEIADGEFVVLVGPSGCGKSTLLRMIAGLESITSGTISIGERVVNNVEPAERDIAMVFQNYALYPHMTVRENLAYGLKNRKTPKEEIERRIAKAAKALEIEQFLERKPRQLSGGQRQRVAMGRAIVREPAAFLFDEPLSNLDAKLRVQMRVEIKRLQRSLGTTSVYVTHDQMEAMTMADRLVVLNAGHIEQVGTPIELYEKPASTFVATFIGSPSMNLLQSPESAAWQPGRAITLPSGGYTFGVRPEDIRILEEGDQDADGFNAQVRIEAVELVGAESYIHAALSDGKPLIFRVAGRSTHNIDEMVRVGASATDVHIFGADGRRVSD.

An ABC transporter domain is found at 4 to 235 (IVLDNVRKSY…PASTFVATFI (232 aa)). 37–44 (GPSGCGKS) is an ATP binding site.

It belongs to the ABC transporter superfamily. sn-glycerol-3-phosphate importer (TC 3.A.1.1.3) family. The complex is composed of two ATP-binding proteins (UgpC), two transmembrane proteins (UgpA and UgpE) and a solute-binding protein (UgpB).

Its subcellular location is the cell inner membrane. The catalysed reaction is sn-glycerol 3-phosphate(out) + ATP + H2O = sn-glycerol 3-phosphate(in) + ADP + phosphate + H(+). Part of the ABC transporter complex UgpBAEC involved in sn-glycerol-3-phosphate (G3P) import. Responsible for energy coupling to the transport system. The polypeptide is sn-glycerol-3-phosphate import ATP-binding protein UgpC (Brucella abortus biovar 1 (strain 9-941)).